A 592-amino-acid polypeptide reads, in one-letter code: Probable auxin efflux carrier component 1c (592 aa).

Topologically, residues 1 to 6 are extracellular; that stretch reads MITGAD. Residues 7 to 27 traverse the membrane as a helical segment; sequence FYHVMTAMVPLYVAMILAYGS. Over 28-38 the chain is Cytoplasmic; it reads VKWWRIFTPDQ. A helical transmembrane segment spans residues 39 to 59; it reads CSGINRFVALFAVPLLSFHFI. Residue V51 participates in (indol-3-yl)acetate binding. Residues 60-70 lie on the Extracellular side of the membrane; it reads STNNPYTMNLR. Residues 71-91 traverse the membrane as a helical segment; that stretch reads FIAADTLQKLIVLALLTLWSH. Topologically, residues 92 to 100 are cytoplasmic; the sequence is LSRRGSLEW. A helical membrane pass occupies residues 101 to 121; the sequence is TITLFSLSTLPNTLVMGIPLL. Residues N112 and L114 each contribute to the (indol-3-yl)acetate site. Over 122 to 131 the chain is Extracellular; sequence KGMYGEFSGS. Residues 132 to 152 traverse the membrane as a helical segment; that stretch reads LMVQIVVLQCIIWYTLMLFMF. Y145 serves as a coordination point for (indol-3-yl)acetate. Residues 153 to 452 are Cytoplasmic-facing; sequence EYRGARILIT…LIRNPNTYSS (300 aa). Disordered stretches follow at residues 214 to 236 and 282 to 331; these read RSDV…SNLT and GATP…AKGE. Polar residues predominate over residues 224-236; the sequence is GFSSTTPRPSNLT. The span at 309–318 shows a compositional bias: pro residues; the sequence is APNPAMAAPP. The chain crosses the membrane as a helical span at residues 453-473; that stretch reads LIGLIWSLVCFRWNFEMPAII. Over 474–476 the chain is Extracellular; that stretch reads LKS. The helical transmembrane segment at 477–497 threads the bilayer; the sequence is ISILSDAGLGMAMFSLGLFMA. The Cytoplasmic segment spans residues 498–511; that stretch reads LQPRIIACGNKVAT. The helical transmembrane segment at 512 to 532 threads the bilayer; that stretch reads FAMAVRFLTGPAVMAAASIAV. Topologically, residues 533–537 are extracellular; sequence GLRGT. A helical transmembrane segment spans residues 538-558; the sequence is LLHVAIVQAALPQGIVPFVFA. (indol-3-yl)acetate-binding residues include I552 and V553. Over 559 to 571 the chain is Cytoplasmic; it reads KEYSVHPDILSTA. A helical membrane pass occupies residues 572–592; the sequence is VIFGMLIALPITLVYYILLGL.

Belongs to the auxin efflux carrier (TC 2.A.69.1) family. As to quaternary structure, homodimer. Expressed at low levels in roots and leaves. Expressed in roots, stem bases, stems, leaves and young panicles.

The protein resides in the membrane. Its function is as follows. May act as a component of the auxin efflux carrier. The chain is Probable auxin efflux carrier component 1c from Oryza sativa subsp. japonica (Rice).